Consider the following 78-residue polypeptide: DNA gyrase inhibitor YacG (78 aa).

The Zn(2+) site is built by Cys7, Cys10, Cys26, and Cys30.

The protein belongs to the DNA gyrase inhibitor YacG family. Interacts with GyrB. The cofactor is Zn(2+).

Inhibits all the catalytic activities of DNA gyrase by preventing its interaction with DNA. Acts by binding directly to the C-terminal domain of GyrB, which probably disrupts DNA binding by the gyrase. This chain is DNA gyrase inhibitor YacG, found in Colwellia psychrerythraea (strain 34H / ATCC BAA-681) (Vibrio psychroerythus).